A 445-amino-acid polypeptide reads, in one-letter code: Probable phosphoglucosamine mutase (445 aa).

The Phosphoserine intermediate role is filled by Ser-99. Ser-99, Asp-238, Asp-240, and Asp-242 together coordinate Mg(2+). A Phosphoserine modification is found at Ser-99.

It belongs to the phosphohexose mutase family. Requires Mg(2+) as cofactor. In terms of processing, activated by phosphorylation.

It carries out the reaction alpha-D-glucosamine 1-phosphate = D-glucosamine 6-phosphate. Catalyzes the conversion of glucosamine-6-phosphate to glucosamine-1-phosphate. In Methanobrevibacter smithii (strain ATCC 35061 / DSM 861 / OCM 144 / PS), this protein is Probable phosphoglucosamine mutase.